A 246-amino-acid chain; its full sequence is Sec-independent protein translocase protein TatB (246 aa).

Residues 1–21 (MFDIGWSELLVIAVVLIVVVG) traverse the membrane as a helical segment. Disordered stretches follow at residues 94–122 (SDLQ…APLV), 179–204 (SRSK…PKPT), and 225–246 (VADA…KDEA). 2 stretches are compositionally biased toward polar residues: residues 97 to 112 (QKAT…TAAP) and 187 to 197 (PETTVATNASE).

The protein belongs to the TatB family. As to quaternary structure, the Tat system comprises two distinct complexes: a TatABC complex, containing multiple copies of TatA, TatB and TatC subunits, and a separate TatA complex, containing only TatA subunits. Substrates initially bind to the TatABC complex, which probably triggers association of the separate TatA complex to form the active translocon.

The protein localises to the cell inner membrane. Its function is as follows. Part of the twin-arginine translocation (Tat) system that transports large folded proteins containing a characteristic twin-arginine motif in their signal peptide across membranes. Together with TatC, TatB is part of a receptor directly interacting with Tat signal peptides. TatB may form an oligomeric binding site that transiently accommodates folded Tat precursor proteins before their translocation. This is Sec-independent protein translocase protein TatB from Agrobacterium fabrum (strain C58 / ATCC 33970) (Agrobacterium tumefaciens (strain C58)).